We begin with the raw amino-acid sequence, 158 residues long: uncharacterized protein (158 aa).

A run of 4 helical transmembrane segments spans residues Phe-42–Tyr-62, Trp-71–Ala-91, Leu-102–Leu-122, and Glu-130–Phe-150.

It localises to the cell membrane. This is an uncharacterized protein from Bacillus subtilis (strain 168).